The chain runs to 712 residues: Eukaryotic translation initiation factor 3 subunit B (712 aa).

Residues 1-98 (MSLTEAEYHE…LFVQFETSEM (98 aa)) are sufficient for interaction with HCR1 and TIF32. Residues 1–224 (MSLTEAEYHE…GVQSWGGADF (224 aa)) are sufficient for interaction with PIC8. The region spanning 37 to 124 (NYVVVDGAPI…HRLLVNRLSD (88 aa)) is the RRM domain. WD repeat units lie at residues 191–229 (RKFFTSKYAKFSPKGTYLFSIHPQGVQSWGGADFSSIDK), 230–293 (FMHN…RTFA), 301–339 (QKEMPWPLVKWSHDDKYCARQGPGALAVYETPSFQLLDK), 342–384 (IKID…QTAR), 452–493 (ELKE…DFYA), 513–555 (ITDK…SNKN), and 566–604 (DKFSGMTNISWDPSGRFVATWSSSWLHTIENGYKLYEFT).

The protein belongs to the eIF-3 subunit B family. Component of the eukaryotic translation initiation factor 3 (eIF-3) complex.

The protein localises to the cytoplasm. RNA-binding component of the eukaryotic translation initiation factor 3 (eIF-3) complex, which is involved in protein synthesis of a specialized repertoire of mRNAs and, together with other initiation factors, stimulates binding of mRNA and methionyl-tRNAi to the 40S ribosome. The eIF-3 complex specifically targets and initiates translation of a subset of mRNAs involved in cell proliferation. The protein is Eukaryotic translation initiation factor 3 subunit B of Scheffersomyces stipitis (strain ATCC 58785 / CBS 6054 / NBRC 10063 / NRRL Y-11545) (Yeast).